We begin with the raw amino-acid sequence, 573 residues long: MISNFILFALFIVTIALITKPLGSYIFRVFNNERTYLDWLAKPFQRVYLLVLGESSKKEQTAKAYFFSLVSFSVMAFIFVLVILLLQGILPLNTQEIKGMSFPQALNTAVSFITNTNWQSYSGETGVSYFAQMLALAVQNFVSAAVGLCVAIALIRSVARHETATIGNFWNDLGKGVFWILLPISIVIAIVYIFQGVPQNVMAYLHVHTLAGTEQIISQGPIASQEAIKSLGTNGGGFFNANSAHPYENPTVITNYIQMVSIFAIAAALTYTFGKWVGNTKQGWLIFGVMLVLFIISLVVMTISELHGLDFLHSKDIQDIYGQVGHLSNMEGKESRFGVFYSTLYNTVSTSASDGGVNSVLDSYSPLAGMMAMLNMAIGEVIFGGVGAGFYGFFMFLMLAVFIGSLMIGRAPSFLGKRIEANDMKWTMFALLISPCCVLVFTGLAAVIPSVHQTLTNSGAHGFSEILYAYISGANNNGSAFAGLSANTNYLNITIALSMLIGRFGVIFAVIMLAGSLVKKKRSLQMSEISSLDTTSFIFAILVFFTILLIGGLTIFPALGLGPILDQLNLNFL.

Transmembrane regions (helical) follow at residues 6–26 (ILFA…GSYI), 66–86 (FFSL…ILLL), 135–155 (ALAV…IALI), 177–197 (VFWI…FQGV), 257–277 (IQMV…GKWV), 283–303 (GWLI…VMTI), 382–402 (IFGG…LAVF), 428–448 (MFAL…AAVI), 493–513 (ITIA…VIML), and 537–557 (FIFA…TIFP).

Belongs to the KdpA family. The system is composed of three essential subunits: KdpA, KdpB and KdpC.

The protein resides in the cell inner membrane. Functionally, part of the high-affinity ATP-driven potassium transport (or Kdp) system, which catalyzes the hydrolysis of ATP coupled with the electrogenic transport of potassium into the cytoplasm. This subunit binds the periplasmic potassium ions and delivers the ions to the membrane domain of KdpB through an intramembrane tunnel. The chain is Potassium-transporting ATPase potassium-binding subunit from Francisella tularensis subsp. mediasiatica (strain FSC147).